The sequence spans 110 residues: UPF0060 membrane protein Francci3_2786 (110 aa).

4 consecutive transmembrane segments (helical) span residues leucine 8–valine 28, glycine 33–leucine 53, isoleucine 62–aspartate 82, and aspartate 87–alanine 107.

It belongs to the UPF0060 family.

It is found in the cell membrane. This chain is UPF0060 membrane protein Francci3_2786, found in Frankia casuarinae (strain DSM 45818 / CECT 9043 / HFP020203 / CcI3).